Consider the following 2494-residue polypeptide: Nuclear receptor corepressor 1 (2494 aa).

Residues Met1–Arg33 show a composition bias toward polar residues. 4 disordered regions span residues Met1–Phe38, Leu53–Asp106, Ser134–Lys170, and Gln198–Gln222. The segment covering Pro71–Gly82 has biased composition (basic and acidic residues). The span at Tyr83–Gln92 shows a compositional bias: polar residues. 3 stretches are compositionally biased toward basic and acidic residues: residues Asn93–Asp106, Ser134–Thr148, and Glu204–Lys213. The interaction with tbl1xr1 stretch occupies residues Ser154 to Asp304. Residues Leu168–Pro208 are a coiled coil. The SANT 1 domain occupies Gln427–Asn478. Disordered stretches follow at residues Pro488–Gly638, Asn671–Lys913, Arg981–Asp1007, Gly1081–Gly1124, Ile1413–Arg1434, Met1488–Glu1585, Leu1745–Ile1845, and Glu1912–Lys1987. Basic and acidic residues-rich tracts occupy residues Ala502 to Glu525 and Lys535 to Ala548. The stretch at Ala502–Ile549 forms a coiled coil. Residues Ala582–Pro616 are compositionally biased toward low complexity. Residues Val617 to Thr629 show a composition bias toward pro residues. In terms of domain architecture, SANT 2 spans Glu622–Asn668. Polar residues predominate over residues Gln692–Ala702. Residues Ser698–Ser726 are a coiled coil. The span at Gln703–Gly722 shows a compositional bias: acidic residues. The segment covering Ala723–Ala741 has biased composition (low complexity). A compositionally biased stretch (polar residues) spans Ala766 to Val779. Positions Ala829–Ala864 are enriched in basic and acidic residues. Polar residues-rich tracts occupy residues Glu881–Cys892, Met993–Pro1004, and Ala1104–Gly1124. A compositionally biased stretch (basic and acidic residues) spans Met1488–Arg1504. Positions Thr1508 to Arg1519 are enriched in polar residues. The segment covering Pro1548–Ala1561 has biased composition (low complexity). Residues Val1771–Ala1810 are a coiled coil. Residues Ala1773–Leu1807 show a composition bias toward basic and acidic residues. Positions Pro1835–Ile1845 are enriched in polar residues. Residues Val1914–Val1935 are compositionally biased toward basic and acidic residues. Low complexity predominate over residues Gln1953 to Pro1972. A compositionally biased stretch (basic and acidic residues) spans Ala1978–Lys1987. Residues Ile2008–Ile2012 carry the CORNR box 1 motif. Positions Ser2018 to His2105 are disordered. Low complexity predominate over residues Ser2027–His2036. Basic and acidic residues predominate over residues His2039–Ile2048. The segment covering Arg2088 to Ile2102 has biased composition (polar residues). Positions Ile2119–Ile2123 match the CORNR box 2 motif. Over residues Gln2135 to Pro2177 the composition is skewed to polar residues. The disordered stretch occupies residues Gln2135–Pro2216. Residues Val2186–Glu2205 are compositionally biased toward basic and acidic residues. The CORNR box 3 signature appears at Leu2322–Ile2326. 2 disordered regions span residues Gly2346 to Ser2413 and Met2446 to Glu2494. Basic residues predominate over residues His2376–Lys2390. 2 stretches are compositionally biased toward polar residues: residues Met2446 to Arg2472 and Gln2485 to Glu2494.

This sequence belongs to the N-CoR nuclear receptor corepressors family. Forms a large corepressor complex that contains sin3a/b, histone deacetylases hdac1 and hdac2, rbbp4 and possibly rbbp7. Interacts with the thyroid receptor (TR, composed of rxra and thrb) and the retinoid acid receptor (RAR, composed of rxra and rara) in the absence of ligand. Interacts with tbl1xr1. Interacts with zbtb33/kaiso.

The protein localises to the nucleus. In terms of biological role, mediates transcriptional repression by certain nuclear receptors. Participates in complexes which promote histone deacetylation and the formation of repressive chromatin structures which may impede access by the basal transcription machinery. In association with hdac3, may play a role in the regulation of the circadian clock. This chain is Nuclear receptor corepressor 1 (ncor1), found in Xenopus tropicalis (Western clawed frog).